A 193-amino-acid chain; its full sequence is Non-specific lipid transfer protein GPI-anchored 1 (193 aa).

Positions 1 to 22 (MKGLHLHLVLVTMTIVASIAAA) are cleaved as a signal peptide. Cystine bridges form between cysteine 35–cysteine 76, cysteine 45–cysteine 60, cysteine 61–cysteine 106, and cysteine 74–cysteine 116. 2 N-linked (GlcNAc...) asparagine glycosylation sites follow: asparagine 110 and asparagine 135. Residues 138 to 161 (TTPVAPAGKSPATPATSTDKGGSA) are disordered. Aspartate 165 is lipidated: GPI-anchor amidated aspartate. The propeptide at 166–193 (GHAVVALAVALMAVSFVLTLPRHVTLGM) is removed in mature form.

This sequence belongs to the plant LTP family. O-glycosylated on hydroxyprolines; noncontiguous hydroxylproline residues are glycosylated with arabinogalactan. Up-regulated in the epidermis of stems and leaves. Expressed in the epidermis, stem cortex, vascular bundles and mesophyll cells in root tips, cotyledons, seedlings, leaves, caulines, flowers, siliques, pollen, and early-developing seeds.

It localises to the cell membrane. The protein localises to the secreted. It is found in the cell wall. The protein resides in the endoplasmic reticulum. Its subcellular location is the golgi apparatus. Functionally, lipid transfer protein that, together with LTPG2, binds to lipids and functions as a component of the cuticular lipid export machinery that performs extensive export of intracellular lipids (e.g. C29 alkane) from epidermal cells to the surface to build the cuticular wax layer and silique walls. Involved in the establishment of resistance to the necrotrophic fungal pathogen Alternaria brassicicola. Contributes to pre-invasive defense against some non-host powdery mildew pathogens by preventing the penetration of the epidermal cell wall by the fungal agents (e.g. Blumeria graminis f. sp. hordei (Bgh)). Maybe involved in seed and ovule maturation and development, probably by regulating the fatty acids homeostasis during suberin and sporopollenin biosynthesis or deposition. This Arabidopsis thaliana (Mouse-ear cress) protein is Non-specific lipid transfer protein GPI-anchored 1.